Consider the following 138-residue polypeptide: Membrane glycoprotein UL139 (138 aa).

Positions 1 to 15 are cleaved as a signal peptide; that stretch reads MLWILVLFALAASAS. A disordered region spans residues 17–37; that stretch reads TTTGTSSNSSQSTSAGTTNTT. The chain crosses the membrane as a helical span at residues 64–84; the sequence is GWTLSGLLLIFTCCLCCFWLV. Over residues 113-129 the composition is skewed to polar residues; sequence SDATLPMGTTGSYTPPQ. The interval 113–138 is disordered; sequence SDATLPMGTTGSYTPPQDGSFPPPPR.

The protein resides in the host membrane. The chain is Membrane glycoprotein UL139 (UL139) from Homo sapiens (Human).